Here is a 182-residue protein sequence, read N- to C-terminus: Large ribosomal subunit protein uL16 (182 aa).

This sequence belongs to the universal ribosomal protein uL16 family.

The chain is Large ribosomal subunit protein uL16 from Pyrobaculum arsenaticum (strain DSM 13514 / JCM 11321 / PZ6).